Here is a 362-residue protein sequence, read N- to C-terminus: Peptide chain release factor 1 (362 aa).

N5-methylglutamine is present on Gln-236.

This sequence belongs to the prokaryotic/mitochondrial release factor family. Methylated by PrmC. Methylation increases the termination efficiency of RF1.

It is found in the cytoplasm. Its function is as follows. Peptide chain release factor 1 directs the termination of translation in response to the peptide chain termination codons UAG and UAA. In Lactobacillus johnsonii (strain CNCM I-12250 / La1 / NCC 533), this protein is Peptide chain release factor 1.